Consider the following 597-residue polypeptide: Aspartate--tRNA(Asp/Asn) ligase (597 aa).

Glu-176 contacts L-aspartate. An aspartate region spans residues 200–203 (QQFK). Residues Arg-222 and His-451 each coordinate L-aspartate. 222 to 224 (RDE) is a binding site for ATP. Glu-489 contacts ATP. L-aspartate is bound at residue Arg-496. 541–544 (GIDR) contributes to the ATP binding site.

The protein belongs to the class-II aminoacyl-tRNA synthetase family. Type 1 subfamily. In terms of assembly, homodimer.

It is found in the cytoplasm. It carries out the reaction tRNA(Asx) + L-aspartate + ATP = L-aspartyl-tRNA(Asx) + AMP + diphosphate. Aspartyl-tRNA synthetase with relaxed tRNA specificity since it is able to aspartylate not only its cognate tRNA(Asp) but also tRNA(Asn). Reaction proceeds in two steps: L-aspartate is first activated by ATP to form Asp-AMP and then transferred to the acceptor end of tRNA(Asp/Asn). The sequence is that of Aspartate--tRNA(Asp/Asn) ligase from Orientia tsutsugamushi (strain Boryong) (Rickettsia tsutsugamushi).